The sequence spans 282 residues: MQVITSVKEAKQIVKDWKSHQLSIGYVPTMGFLHDGHLSLVKHAKTQDKVIVSIFVNPMQFGPNEDFSSYPRDLERDIKMCQDNGVDMVFIPDATQMYLKNFSTYVDMNTITDKLCGAKRPGHFRGVCTVLTKFFNILNPDIVYMGQKDAQQCVVVRHMVDDLNFDLKIQICPIIREEDGLAKSSRNVYLSKEERKASLAISQSIFLAEKLVREGEKNTSKIIQAMKDILEKEKLIKIDYIELVDFNTMENIENITDNVLGAVAAFVGKTRLIDNFLVQGLK.

30–37 is a binding site for ATP; it reads MGFLHDGH. Histidine 37 (proton donor) is an active-site residue. Glutamine 60 contacts (R)-pantoate. Glutamine 60 provides a ligand contact to beta-alanine. Residue 146–149 participates in ATP binding; sequence GQKD. A (R)-pantoate-binding site is contributed by glutamine 152. ATP contacts are provided by residues isoleucine 175 and 183 to 186; that span reads KSSR.

The protein belongs to the pantothenate synthetase family. Homodimer.

It localises to the cytoplasm. The enzyme catalyses (R)-pantoate + beta-alanine + ATP = (R)-pantothenate + AMP + diphosphate + H(+). The protein operates within cofactor biosynthesis; (R)-pantothenate biosynthesis; (R)-pantothenate from (R)-pantoate and beta-alanine: step 1/1. Its function is as follows. Catalyzes the condensation of pantoate with beta-alanine in an ATP-dependent reaction via a pantoyl-adenylate intermediate. The protein is Pantothenate synthetase of Campylobacter jejuni subsp. jejuni serotype O:6 (strain 81116 / NCTC 11828).